The chain runs to 268 residues: Cytochrome c oxidase subunit 3 (268 aa).

The next 7 helical transmembrane spans lie at 19–39 (PWPI…VLTM), 49–69 (FDLG…DIVI), 85–105 (LIIG…SVFW), 124–144 (PVGI…IILL), 165–185 (SIIG…FQAF), 202–222 (VFFA…LFLF), and 245–265 (ILYW…VYFW).

The protein belongs to the cytochrome c oxidase subunit 3 family. As to quaternary structure, component of the cytochrome c oxidase (complex IV, CIV), a multisubunit enzyme composed of a catalytic core of 3 subunits and several supernumerary subunits. The complex exists as a monomer or a dimer and forms supercomplexes (SCs) in the inner mitochondrial membrane with ubiquinol-cytochrome c oxidoreductase (cytochrome b-c1 complex, complex III, CIII).

The protein localises to the mitochondrion inner membrane. It carries out the reaction 4 Fe(II)-[cytochrome c] + O2 + 8 H(+)(in) = 4 Fe(III)-[cytochrome c] + 2 H2O + 4 H(+)(out). Functionally, component of the cytochrome c oxidase, the last enzyme in the mitochondrial electron transport chain which drives oxidative phosphorylation. The respiratory chain contains 3 multisubunit complexes succinate dehydrogenase (complex II, CII), ubiquinol-cytochrome c oxidoreductase (cytochrome b-c1 complex, complex III, CIII) and cytochrome c oxidase (complex IV, CIV), that cooperate to transfer electrons derived from NADH and succinate to molecular oxygen, creating an electrochemical gradient over the inner membrane that drives transmembrane transport and the ATP synthase. Cytochrome c oxidase is the component of the respiratory chain that catalyzes the reduction of oxygen to water. Electrons originating from reduced cytochrome c in the intermembrane space (IMS) are transferred via the dinuclear copper A center (CU(A)) of subunit 2 and heme A of subunit 1 to the active site in subunit 1, a binuclear center (BNC) formed by heme A3 and copper B (CU(B)). The BNC reduces molecular oxygen to 2 water molecules using 4 electrons from cytochrome c in the IMS and 4 protons from the mitochondrial matrix. The polypeptide is Cytochrome c oxidase subunit 3 (COIII) (Schizophyllum commune (Split gill fungus)).